Here is a 192-residue protein sequence, read N- to C-terminus: SRP-independent targeting protein 2 homolog (192 aa).

Helical transmembrane passes span 16 to 36 (ILTFMLAADLIVNVLFWILRF) and 102 to 122 (WILIFLAALTSVKVFAFYLLV). A disordered region spans residues 149-192 (LNQPPQQQQQQQQQQHQQHATPSEPVLSKRQQKLRKKAAKYSRP). The span at 151–167 (QPPQQQQQQQQQQHQQH) shows a compositional bias: low complexity. Residues 178–192 (RQQKLRKKAAKYSRP) are compositionally biased toward basic residues.

It belongs to the TMEM208 family.

The protein resides in the endoplasmic reticulum membrane. In terms of biological role, may function in a SRP (signal recognition particle) and GET (guided entry of tail-anchored proteins) independent pathway for targeting a broad range of substrate proteins to the endoplasmic reticulum. Has a role in meiosis. In Schizosaccharomyces pombe (strain 972 / ATCC 24843) (Fission yeast), this protein is SRP-independent targeting protein 2 homolog.